The primary structure comprises 283 residues: Acetylglutamate kinase (283 aa).

Residues 64–65 (GG), arginine 86, and asparagine 179 contribute to the substrate site.

Belongs to the acetylglutamate kinase family. ArgB subfamily.

It localises to the cytoplasm. It carries out the reaction N-acetyl-L-glutamate + ATP = N-acetyl-L-glutamyl 5-phosphate + ADP. It functions in the pathway amino-acid biosynthesis; L-arginine biosynthesis; N(2)-acetyl-L-ornithine from L-glutamate: step 2/4. Its function is as follows. Catalyzes the ATP-dependent phosphorylation of N-acetyl-L-glutamate. The polypeptide is Acetylglutamate kinase (Campylobacter hominis (strain ATCC BAA-381 / DSM 21671 / CCUG 45161 / LMG 19568 / NCTC 13146 / CH001A)).